The sequence spans 601 residues: Sulfite reductase [NADPH] flavoprotein alpha-component (601 aa).

The Flavodoxin-like domain maps to 64-202; it reads ITLISASQTG…AAQEWRARVV (139 aa). FMN is bound by residues 70–75, 117–120, and 153–162; these read SQTGNA, STQG, and LGDTSYEFFC. One can recognise an FAD-binding FR-type domain in the interval 236-450; sequence EAPLSASLAV…IEHNDNFRLP (215 aa). FAD-binding positions include T324, A358, 388–391, 406–408, Y412, and 421–424; these read RLYS, TVG, and GGAS. Residues 521 to 522, 527 to 531, and D563 each bind NADP(+); these read SR and KIYVQ. Position 601 (Y601) interacts with FAD.

This sequence belongs to the NADPH-dependent sulphite reductase flavoprotein subunit CysJ family. It in the N-terminal section; belongs to the flavodoxin family. The protein in the C-terminal section; belongs to the flavoprotein pyridine nucleotide cytochrome reductase family. As to quaternary structure, alpha(8)-beta(8). The alpha component is a flavoprotein, the beta component is a hemoprotein. FAD is required as a cofactor. FMN serves as cofactor.

It carries out the reaction hydrogen sulfide + 3 NADP(+) + 3 H2O = sulfite + 3 NADPH + 4 H(+). It functions in the pathway sulfur metabolism; hydrogen sulfide biosynthesis; hydrogen sulfide from sulfite (NADPH route): step 1/1. Functionally, component of the sulfite reductase complex that catalyzes the 6-electron reduction of sulfite to sulfide. This is one of several activities required for the biosynthesis of L-cysteine from sulfate. The flavoprotein component catalyzes the electron flow from NADPH -&gt; FAD -&gt; FMN to the hemoprotein component. In Citrobacter koseri (strain ATCC BAA-895 / CDC 4225-83 / SGSC4696), this protein is Sulfite reductase [NADPH] flavoprotein alpha-component.